The chain runs to 90 residues: Large ribosomal subunit protein bL27 (90 aa).

The segment at 1-22 is disordered; the sequence is MAHKKAGGSTRNGRDSNPKMLG.

It belongs to the bacterial ribosomal protein bL27 family.

The chain is Large ribosomal subunit protein bL27 from Coxiella burnetii (strain Dugway 5J108-111).